The following is a 472-amino-acid chain: PEP-dependent dihydroxyacetone kinase, phosphoryl donor subunit DhaM (472 aa).

One can recognise a PTS EIIA type-4 domain in the interval 1–135 (MVNLVIVSHS…NALEAKRVQL (135 aa)). The Tele-phosphohistidine intermediate role is filled by histidine 9. An HPr domain is found at 156–243 (ARSVSVVIQN…ALAAENFGEP (88 aa)). Histidine 170 (pros-phosphohistidine intermediate) is an active-site residue. Residues 266-472 (PQPQDRISRE…DIPGKRVIRG (207 aa)) form a PTS EI-like, N-terminal part region. Histidine 432 functions as the Tele-phosphohistidine intermediate in the catalytic mechanism.

The protein belongs to the PEP-utilizing enzyme family. As to quaternary structure, homodimer. The dihydroxyacetone kinase complex is composed of a homodimer of DhaM, a homodimer of DhaK and the subunit DhaL.

It catalyses the reaction dihydroxyacetone + phosphoenolpyruvate = dihydroxyacetone phosphate + pyruvate. Its function is as follows. Component of the dihydroxyacetone kinase complex, which is responsible for the phosphoenolpyruvate (PEP)-dependent phosphorylation of dihydroxyacetone. DhaM serves as the phosphoryl donor. Is phosphorylated by phosphoenolpyruvate in an EI- and HPr-dependent reaction, and a phosphorelay system on histidine residues finally leads to phosphoryl transfer to DhaL and dihydroxyacetone. The protein is PEP-dependent dihydroxyacetone kinase, phosphoryl donor subunit DhaM of Klebsiella michiganensis (strain ATCC 8724 / DSM 4798 / JCM 20051 / NBRC 3318 / NRRL B-199 / KCTC 1686 / BUCSAV 143 / CCM 1901).